Reading from the N-terminus, the 32-residue chain is Turripeptide XIV-18 (32 aa).

The residue at position 30 (I30) is an Isoleucine amide.

Post-translationally, contains 2 disulfide bonds. As to expression, expressed by the venom duct.

The protein localises to the secreted. This Gemmula speciosa (Splendid gem-turris) protein is Turripeptide XIV-18.